A 334-amino-acid polypeptide reads, in one-letter code: Putative violet-sensitive opsin (334 aa).

Residues 1–29 (MGKYFYLYENISKVGPYDGPQYYLAPTWA) lie on the Extracellular side of the membrane. Asparagine 10 is a glycosylation site (N-linked (GlcNAc...) asparagine). A helical membrane pass occupies residues 30–54 (FYLQAAFMGFVFFVGTPLNFVVLLA). Topologically, residues 55-66 (TAKYKKLRVPLN) are cytoplasmic. Residues 67–88 (YILVNITFAGFIFVTFSVSQVF) form a helical membrane-spanning segment. The Extracellular portion of the chain corresponds to 89 to 106 (LASVRGYYFFGQTLCALE). Residues cysteine 103 and cysteine 179 are joined by a disulfide bond. The chain crosses the membrane as a helical span at residues 107 to 126 (AAVGAVAGLVTSWSLAVLSF). Topologically, residues 127 to 145 (ERYLVICKPFGAFKFGSNH) are cytoplasmic. Residues 146–168 (ALAAVIFTWFMGVVRCPPFFGWS) traverse the membrane as a helical segment. Residues 169 to 194 (RYIPEGLGCSCGPDWYTNCEEFSCAS) lie on the Extracellular side of the membrane. A helical transmembrane segment spans residues 195 to 222 (YSKFLLVTCFICPITIIIFSYSQLLGAL). At 223-244 (RAVAAQQAESASTQKAEKEVSR) the chain is on the cytoplasmic side. A helical transmembrane segment spans residues 245 to 272 (MIIVMVASFVTCYGPYALTAQYYAYSQD). The Extracellular portion of the chain corresponds to 273 to 279 (ENKDYRL). Residues 280–301 (VTIPAFFSKSSCVYNPLIYAFM) traverse the membrane as a helical segment. Lysine 288 is modified (N6-(retinylidene)lysine). Residues 302-334 (NKQFNGCIMEMVFGKKMEEASEVSSKTEVSTDS) lie on the Cytoplasmic side of the membrane.

This sequence belongs to the G-protein coupled receptor 1 family. Opsin subfamily. In terms of processing, phosphorylated on some or all of the serine and threonine residues present in the C-terminal region. The three color pigments are found in the cone photoreceptor cells.

It is found in the membrane. In terms of biological role, visual pigments are the light-absorbing molecules that mediate vision. They consist of an apoprotein, opsin, covalently linked to cis-retinal. The polypeptide is Putative violet-sensitive opsin (Oryzias latipes (Japanese rice fish)).